The chain runs to 83 residues: Short neurotoxin OKI-Ed (83 aa).

A signal peptide spans 1 to 21 (MKTLLLTLVVVTIVCLDLGYT). 4 cysteine pairs are disulfide-bonded: Cys-24–Cys-45, Cys-38–Cys-62, Cys-64–Cys-75, and Cys-76–Cys-81.

The protein belongs to the three-finger toxin family. Short-chain subfamily. Type I alpha-neurotoxin sub-subfamily. In terms of tissue distribution, expressed by the venom gland.

The protein resides in the secreted. Its function is as follows. Binds to muscle nicotinic acetylcholine receptor (nAChR) and inhibit acetylcholine from binding to the receptor, thereby impairing neuromuscular transmission. The sequence is that of Short neurotoxin OKI-Ed from Laticauda semifasciata (Black-banded sea krait).